Here is a 27-residue protein sequence, read N- to C-terminus: Toxin Bcg III 21.00 (27 aa).

It localises to the secreted. The protein resides in the nematocyst. Functionally, possible voltage-gated potassium channel (Kv) blocker. The sequence is that of Toxin Bcg III 21.00 from Bunodosoma cangicum (Sea anemone).